A 41-amino-acid chain; its full sequence is Trypsin inhibitor (41 aa).

Intrachain disulfides connect cysteine 15-cysteine 26, cysteine 17-cysteine 24, and cysteine 29-cysteine 37.

In terms of biological role, has two active sites that simultaneously bind and inhibit trypsin. This Trichosanthes kirilowii (Chinese snake gourd) protein is Trypsin inhibitor.